A 144-amino-acid chain; its full sequence is Histone H2B.2, sperm (144 aa).

Residues 1–51 (MPRSPAKTSPRKGSPRKGSPSRKASPKRGGKGAKRAGKGGRRRRVVKRRRR) are disordered. Short sequence motifs (SPKK motif) lie at residues 4–7 (SPAK), 9–12 (SPRK), 14–17 (SPRK), 19–22 (SPSR), and 25–28 (SPKR). Ser-14, Ser-19, and Ser-25 each carry phosphoserine. Basic residues predominate over residues 24–51 (ASPKRGGKGAKRAGKGGRRRRVVKRRRR). Ser-131 carries O-linked (GlcNAc) serine glycosylation. Residue Lys-139 forms a Glycyl lysine isopeptide (Lys-Gly) (interchain with G-Cter in ubiquitin) linkage.

It belongs to the histone H2B family. In terms of assembly, the nucleosome is a histone octamer containing two molecules each of H2A, H2B, H3 and H4 assembled in one H3-H4 heterotetramer and two H2A-H2B heterodimers. The octamer wraps approximately 147 bp of DNA. In terms of processing, monoubiquitination of Lys-139 gives a specific tag for epigenetic transcriptional activation and is also prerequisite for histone H3 'Lys-4' and 'Lys-79' methylation. Phosphorylated on SPKK motifs 3, 4 and 5; which may regulate DNA binding. Dephosphorylated during maturation of spermatids to mature sperm and rephosphorylated at fertilization.

It localises to the nucleus. The protein localises to the chromosome. Its function is as follows. Core component of nucleosome. Nucleosomes wrap and compact DNA into chromatin, limiting DNA accessibility to the cellular machineries which require DNA as a template. Histones thereby play a central role in transcription regulation, DNA repair, DNA replication and chromosomal stability. DNA accessibility is regulated via a complex set of post-translational modifications of histones, also called histone code, and nucleosome remodeling. The sequence is that of Histone H2B.2, sperm from Parechinus angulosus (Angulate sea urchin).